The primary structure comprises 113 residues: uncharacterized protein (113 aa).

The disordered stretch occupies residues 78–113 (YCNRGSERTNQGNRGSAPSKILLPRTIADPFRGGPE).

This is an uncharacterized protein from Halobacterium phage phiH (Bacteriophage phi-H).